The chain runs to 218 residues: Imidazole glycerol phosphate synthase subunit HisH (218 aa).

The Glutamine amidotransferase type-1 domain maps to S12–Q218. C88 serves as the catalytic Nucleophile. Catalysis depends on residues H196 and E198.

Heterodimer of HisH and HisF.

It localises to the cytoplasm. The catalysed reaction is 5-[(5-phospho-1-deoxy-D-ribulos-1-ylimino)methylamino]-1-(5-phospho-beta-D-ribosyl)imidazole-4-carboxamide + L-glutamine = D-erythro-1-(imidazol-4-yl)glycerol 3-phosphate + 5-amino-1-(5-phospho-beta-D-ribosyl)imidazole-4-carboxamide + L-glutamate + H(+). It catalyses the reaction L-glutamine + H2O = L-glutamate + NH4(+). It functions in the pathway amino-acid biosynthesis; L-histidine biosynthesis; L-histidine from 5-phospho-alpha-D-ribose 1-diphosphate: step 5/9. Its function is as follows. IGPS catalyzes the conversion of PRFAR and glutamine to IGP, AICAR and glutamate. The HisH subunit catalyzes the hydrolysis of glutamine to glutamate and ammonia as part of the synthesis of IGP and AICAR. The resulting ammonia molecule is channeled to the active site of HisF. The chain is Imidazole glycerol phosphate synthase subunit HisH from Halobacterium salinarum (strain ATCC 700922 / JCM 11081 / NRC-1) (Halobacterium halobium).